The primary structure comprises 954 residues: E3 ubiquitin-protein ligase arkadia (954 aa).

A compositionally biased stretch (polar residues) spans 50–66; that stretch reads LCSDTNKQQRDLNSNGT. 2 disordered regions span residues 50 to 175 and 193 to 276; these read LCSD…VSSL and RKRF…SGGM. Low complexity-rich tracts occupy residues 112-131 and 232-251; these read SSFSDCISSPSSSSHFGDSD and SSSSSSENDLSSESSSSSST. An SUMO interaction motif 1 (SIM) motif is present at residues 280–284; sequence VVVIE. The SUMO interaction motif 2 (SIM) motif lies at 305 to 311; sequence EVEIVTV. 3 disordered regions span residues 318–346, 364–452, and 485–509; these read RTTLGHPRSHWGQNTQSGRTQEQRTRNRV, TVDE…MPRL, and HFPHHHHHHHQSSHPGVPLSPSFRD. Over residues 328–337 the composition is skewed to polar residues; it reads WGQNTQSGRT. Positions 360-364 match the SUMO interaction motif 3 (SIM) motif; sequence VVDLT. Positions 385–395 are enriched in low complexity; sequence VSTVSSNTSTS. Over residues 485 to 496 the composition is skewed to basic residues; the sequence is HFPHHHHHHHQS. Positions 867–869 are ubiquitin binding; sequence YPH. 2 residues coordinate Zn(2+): Cys902 and Cys905. The RING-type; atypical zinc-finger motif lies at 902 to 943; that stretch reads CTICLSILEEGEDVRRLPCMHLFHQVCVDQWLITNKKCPICR. The tract at residues 917–921 is ubiquitin binding; sequence RLPCM. 2 residues coordinate Zn(2+): His925 and Cys928.

It belongs to the Arkadia family. As to quaternary structure, monomer.

Its subcellular location is the nucleus. It is found in the cytoplasm. It localises to the PML body. It carries out the reaction S-ubiquitinyl-[E2 ubiquitin-conjugating enzyme]-L-cysteine + [acceptor protein]-L-lysine = [E2 ubiquitin-conjugating enzyme]-L-cysteine + N(6)-ubiquitinyl-[acceptor protein]-L-lysine.. Its pathway is protein modification; protein ubiquitination. Its activity is regulated as follows. Binds free ubiquitin non-covalently via its RING-type zinc finger. Ubiquitin-binding leads to enhance the E3 ubiquitin-protein ligase activity by stabilizing the ubiquitin-conjugating enzyme E2 (donor ubiquitin) in the 'closed' conformation and activating ubiquitin transfer. In terms of biological role, E3 ubiquitin-protein ligase required for mesoderm patterning during embryonic development. Acts as an enhancer of the transcriptional responses of the smad2/smad3 effectors, which are activated downstream of BMP. Acts by mediating ubiquitination and degradation of SMAD inhibitors such as smad7, inducing their proteasomal degradation and thereby enhancing the transcriptional activity of TGF-beta and BMP. Specifically binds polysumoylated chains via SUMO interaction motifs (SIMs) and mediates ubiquitination of sumoylated substrates. The regulation of the BMP-SMAD signaling is however independent of sumoylation and is not dependent of SUMO interaction motifs (SIMs). The polypeptide is E3 ubiquitin-protein ligase arkadia (rnf111) (Xenopus tropicalis (Western clawed frog)).